Reading from the N-terminus, the 114-residue chain is Large ribosomal subunit protein uL18 (114 aa).

Belongs to the universal ribosomal protein uL18 family. Part of the 50S ribosomal subunit; part of the 5S rRNA/L5/L18/L25 subcomplex. Contacts the 5S and 23S rRNAs.

Its function is as follows. This is one of the proteins that bind and probably mediate the attachment of the 5S RNA into the large ribosomal subunit, where it forms part of the central protuberance. This is Large ribosomal subunit protein uL18 from Azobacteroides pseudotrichonymphae genomovar. CFP2.